Reading from the N-terminus, the 459-residue chain is Protein ABHD15 (459 aa).

Residues 1–28 form the signal peptide; it reads MPPWAAALALLLAALALLLLRPWKRAVG. Residues Asp-351 and His-382 each act as charge relay system in the active site. A Phosphoserine modification is found at Ser-425.

The protein belongs to the AB hydrolase superfamily. AB hydrolase 4 family. As to quaternary structure, interacts with PDE3B; this interaction regulates PDE3B's stability and expression and, thereby, impacts the antilipolytic action of insulin. As to expression, mainly expressed in adipocytes and adipose depots, followed by a weak expression in liver and pancreas. In white adipose tissue (WAT), only expressed in mature adipocytes and primary adipocytes differentiated from stromal vascular cells (SVCs), but not in undifferentiated SVCs.

It is found in the secreted. Its function is as follows. May regulate adipocyte lipolysis and liver lipid accumulation. This Mus musculus (Mouse) protein is Protein ABHD15.